The sequence spans 195 residues: Elongation factor Ts (195 aa).

Positions 81 to 84 (TDFV) are involved in Mg(2+) ion dislocation from EF-Tu.

This sequence belongs to the EF-Ts family.

It is found in the cytoplasm. Its function is as follows. Associates with the EF-Tu.GDP complex and induces the exchange of GDP to GTP. It remains bound to the aminoacyl-tRNA.EF-Tu.GTP complex up to the GTP hydrolysis stage on the ribosome. In Rubrobacter xylanophilus (strain DSM 9941 / JCM 11954 / NBRC 16129 / PRD-1), this protein is Elongation factor Ts.